The following is a 382-amino-acid chain: POU domain, class 3, transcription factor 2-A (382 aa).

Disordered regions lie at residues Pro69–Gly136, Gly150–Ser206, and Glu348–Gln382. Over residues Ser122 to Gly136 the composition is skewed to polar residues. Residues Leu165 to His178 show a composition bias toward basic and acidic residues. Positions Gln179–Gly194 are enriched in low complexity. Positions Glu201–Asp275 constitute a POU-specific domain. The homeobox DNA-binding region spans Lys293–Thr352.

The protein belongs to the POU transcription factor family. Class-3 subfamily. Expressed in the developing brain and spinal cord. Also found in a restricted region of the auditory vesicle during development. In the adult, expression is restricted to the brain.

It is found in the nucleus. In terms of biological role, transcription factor that may be implicated in patterning of the central nervous system during early development. The chain is POU domain, class 3, transcription factor 2-A (pou3f2-a) from Xenopus laevis (African clawed frog).